The chain runs to 241 residues: Ribonuclease PH (241 aa).

Phosphate-binding positions include R87 and 125 to 127 (GTR).

The protein belongs to the RNase PH family. In terms of assembly, homohexameric ring arranged as a trimer of dimers.

It carries out the reaction tRNA(n+1) + phosphate = tRNA(n) + a ribonucleoside 5'-diphosphate. In terms of biological role, phosphorolytic 3'-5' exoribonuclease that plays an important role in tRNA 3'-end maturation. Removes nucleotide residues following the 3'-CCA terminus of tRNAs; can also add nucleotides to the ends of RNA molecules by using nucleoside diphosphates as substrates, but this may not be physiologically important. Probably plays a role in initiation of 16S rRNA degradation (leading to ribosome degradation) during starvation. In Salinispora tropica (strain ATCC BAA-916 / DSM 44818 / JCM 13857 / NBRC 105044 / CNB-440), this protein is Ribonuclease PH.